The sequence spans 60 residues: MDPCECSKSGNCNCGGSCTCTNCSCKSCKKSCCPCCPSGCTKCASGCVCKGKTCDTSCCQ.

The interval 1–28 is beta; it reads MDPCECSKSGNCNCGGSCTCTNCSCKSC. A divalent metal cation-binding residues include C4, C6, C12, C14, C18, C20, C23, C25, C28, C32, C33, C35, C36, C40, C43, C47, C49, C54, C58, and C59. The alpha stretch occupies residues 29–60; that stretch reads KKSCCPCCPSGCTKCASGCVCKGKTCDTSCCQ.

It belongs to the metallothionein superfamily. Type 1 family.

Functionally, metallothioneins have a high content of cysteine residues that bind various heavy metals. The protein is Metallothionein A (mta) of Parachaenichthys charcoti (Charcot's dragonfish).